A 259-amino-acid chain; its full sequence is O-antigen export system permease protein RfbA (259 aa).

6 consecutive transmembrane segments (helical) span residues 33–53, 73–95, 111–131, 142–162, 176–196, and 228–248; these read FGYL…YFIF, FPWQ…NAQI, VMME…FLFV, WGIP…SIIF, VSLG…SDMI, and EYIS…LAIF. Positions 33 to 251 constitute an ABC transmembrane type-2 domain; that stretch reads FGYLWSIANP…IVGLAIFNKL (219 aa).

It belongs to the ABC-2 integral membrane protein family.

Its subcellular location is the cell inner membrane. Functionally, may form an ATP-driven O-antigen export apparatus, in association with RfbB. The sequence is that of O-antigen export system permease protein RfbA (rfbA) from Klebsiella pneumoniae.